The following is a 138-amino-acid chain: Phospholipase A2 crotoxin basic chain CBa2 (138 aa).

The N-terminal stretch at 1 to 16 is a signal peptide; sequence MRALWIVAVLLVGVEG. 7 cysteine pairs are disulfide-bonded: Cys42–Cys131, Cys44–Cys60, Cys59–Cys111, Cys65–Cys138, Cys66–Cys104, Cys73–Cys97, and Cys91–Cys102. The Ca(2+) site is built by Tyr43, Gly45, and Gly47. His63 is an active-site residue. Asp64 serves as a coordination point for Ca(2+). Asp105 is an active-site residue.

It belongs to the phospholipase A2 family. Group II subfamily. D49 sub-subfamily. In terms of assembly, heterodimer of one of the acidic (CA1, CA2, CA3 or CA4) and one of the basic (CBa1, CBa2, CBb, CBc or CBd) subunits; non-covalently linked. The acidic subunit is non-toxic, without enzymatic activity and comprises 3 peptides that are cross-linked by 5 disulfide bridges. The basic subunit is toxic, has phospholipase A2 activity and is composed of a single chain. Multiple variants of each subunit give different crotoxin complexes that can be subdivided into 2 classes: (1) those of high toxicity, low PLA2 activity (CBb, CBc and CBd linked with high affinity to any CA) and high stability (K(d)=4.5 nM) and (2) those of moderate toxicity, high PLA2 activity (CBa2 linked with low affinity to any CA) and low stability (K(d)=25 nM). Interacts with human NBD1 domain of CFTR. Requires Ca(2+) as cofactor. As to expression, expressed by the venom gland.

The protein localises to the secreted. The enzyme catalyses a 1,2-diacyl-sn-glycero-3-phosphocholine + H2O = a 1-acyl-sn-glycero-3-phosphocholine + a fatty acid + H(+). Functionally, heterodimer CA-CB: Crotoxin is a potent presynaptic neurotoxin that possesses phospholipase A2 (PLA2) activity and exerts a lethal action by blocking neuromuscular transmission. It consists of a non-covalent association of a basic and weakly toxic PLA2 subunit (CBa2, CBb, CBc, or CBd), with a small acidic, non-enzymatic and non-toxic subunit (CA1, CA2, CA3 or CA4). The complex acts by binding to a specific 48-kDa protein (R48) receptor located on presynaptic membranes, forming a transient ternary complex CA-CB-R48, followed by dissociation of the CA-CB complex and release of the CA subunit. At equilibrium, only the CB subunits remain associated with the specific crotoxin receptor. In addition to neurotoxicity, crotoxin has been found to exert myotoxicity, nephrotoxicity, and cardiovascular toxicity. Moreover, anti-inflammatory, immunomodulatory, anti-tumor and analgesic effects of crotoxin have also been reported. Its function is as follows. Monomer CBa2: The basic subunit of crotoxin is a snake venom phospholipase A2 (PLA2) that exhibits weak neurotoxicity (10-fold less than the heterodimer) and strong anticoagulant effects by binding to factor Xa (F10) and inhibiting the prothrombinase activity (IC(50) is 41 nM). In addition, it shows the same effects described for the heterodimer and binds the nucleotide-binding domain (NBD1) of CFTR chloride channels and increases the channel current. PLA2 catalyzes the calcium-dependent hydrolysis of the 2-acyl groups in 3-sn-phosphoglycerides. The sequence is that of Phospholipase A2 crotoxin basic chain CBa2 from Crotalus durissus terrificus (South American rattlesnake).